Here is a 181-residue protein sequence, read N- to C-terminus: ATP synthase subunit b (181 aa).

The chain crosses the membrane as a helical span at residues 24-44; sequence LFPNLPNFIAHLLATIILVIV.

This sequence belongs to the ATPase B chain family. As to quaternary structure, F-type ATPases have 2 components, F(1) - the catalytic core - and F(0) - the membrane proton channel. F(1) has five subunits: alpha(3), beta(3), gamma(1), delta(1), epsilon(1). F(0) has three main subunits: a(1), b(2) and c(10-14). The alpha and beta chains form an alternating ring which encloses part of the gamma chain. F(1) is attached to F(0) by a central stalk formed by the gamma and epsilon chains, while a peripheral stalk is formed by the delta and b chains.

It localises to the cell membrane. In terms of biological role, f(1)F(0) ATP synthase produces ATP from ADP in the presence of a proton or sodium gradient. F-type ATPases consist of two structural domains, F(1) containing the extramembraneous catalytic core and F(0) containing the membrane proton channel, linked together by a central stalk and a peripheral stalk. During catalysis, ATP synthesis in the catalytic domain of F(1) is coupled via a rotary mechanism of the central stalk subunits to proton translocation. Its function is as follows. Component of the F(0) channel, it forms part of the peripheral stalk, linking F(1) to F(0). This is ATP synthase subunit b from Mycoplasma mycoides subsp. mycoides SC (strain CCUG 32753 / NCTC 10114 / PG1).